The primary structure comprises 245 residues: Alanyl-tRNA editing protein AlaX-M (245 aa).

4 residues coordinate Zn(2+): His-107, His-111, Cys-210, and His-214.

The protein belongs to the class-II aminoacyl-tRNA synthetase family. Editing domain AlaX-M subfamily. The cofactor is Zn(2+).

It localises to the cytoplasm. In terms of biological role, functions in trans to edit the amino acid moiety from mischarged charged tRNA(Ala). This is Alanyl-tRNA editing protein AlaX-M (alaXM) from Methanosarcina acetivorans (strain ATCC 35395 / DSM 2834 / JCM 12185 / C2A).